Consider the following 421-residue polypeptide: Probable tRNA N6-adenosine threonylcarbamoyltransferase, mitochondrial (421 aa).

The N-terminal 22 residues, 1-22, are a transit peptide targeting the mitochondrion; that stretch reads MNIPKILNNNLVLKRIFCRNYS. A divalent metal cation is bound by residues His133 and His137. Substrate is bound by residues 156-160, Asp189, Gly208, Glu212, 308-309, and Thr336; these read LLSGG and AN. Asp337 is a binding site for a divalent metal cation.

It belongs to the KAE1 / TsaD family. Homodimer. A divalent metal cation is required as a cofactor.

It is found in the mitochondrion. The enzyme catalyses L-threonylcarbamoyladenylate + adenosine(37) in tRNA = N(6)-L-threonylcarbamoyladenosine(37) in tRNA + AMP + H(+). Required for the formation of a threonylcarbamoyl group on adenosine at position 37 (t(6)A37) in mitochondrial tRNAs that read codons beginning with adenine. Probably involved in the transfer of the threonylcarbamoyl moiety of threonylcarbamoyl-AMP (TC-AMP) to the N6 group of A37. Involved in mitochondrial genome maintenance. The chain is Probable tRNA N6-adenosine threonylcarbamoyltransferase, mitochondrial from Caenorhabditis elegans.